Consider the following 671-residue polypeptide: Talaropentaene synthase (671 aa).

Position 92 (Asp-92) interacts with Mg(2+). The DDXXD 1 signature appears at 92 to 96 (DDMTD). The NSE/DTE signature appears at 223–231 (NDLYSYEKE). Isopentenyl diphosphate-binding residues include Lys-389, Arg-392, and His-421. Residues Asp-428 and Asp-432 each coordinate Mg(2+). Positions 428-432 (DDIED) match the DDXXD 2 motif. Residue Arg-437 participates in dimethylallyl diphosphate binding. Position 438 (Arg-438) interacts with isopentenyl diphosphate. The dimethylallyl diphosphate site is built by Lys-515, Thr-516, Gln-551, Asn-558, Lys-568, and Lys-578.

It in the N-terminal section; belongs to the terpene synthase family. The protein in the C-terminal section; belongs to the FPP/GGPP synthase family. Mg(2+) serves as cofactor.

The enzyme catalyses 5 isopentenyl diphosphate + dimethylallyl diphosphate = all-trans-hexaprenyl diphosphate + 5 diphosphate. The catalysed reaction is all-trans-hexaprenyl diphosphate = talaropentaene + diphosphate. In terms of biological role, bifunctional terpene synthase that converts dimethylallyl diphosphate (DMAPP) and isopentenyl diphosphate (IPP) into talaropentaene as a single product. The C-terminal prenyltransferase (PT) domain of MpMS catalyzes formation of hexaprenyl diphosphate (HexPP), whereas the N-terminal terpene cyclase (TC) domain catalyzes the cyclization of HexPP to talaropentaene. The sequence is that of Talaropentaene synthase from Talaromyces verruculosus (Penicillium verruculosum).